We begin with the raw amino-acid sequence, 320 residues long: Heterogeneous nuclear ribonucleoprotein A1-like 2 (320 aa).

The interval 4–94 (SASPKEPEQL…EPKRAVSRED (91 aa)) is globular A domain. Phosphoserine occurs at positions 6 and 22. RRM domains lie at 14–97 (RKLF…DSQR) and 105–184 (KKIF…LPKQ). The segment at 95-185 (SQRPGAHLTV…EVRKALPKQE (91 aa)) is globular B domain. Residues 181-216 (LPKQEMASASSSQRGRRGSGNFGGGRGDGFGGNDNF) are disordered. Residues R194, R206, R218, and R225 each carry the asymmetric dimethylarginine; alternate modification. R194, R206, R218, and R225 each carry omega-N-methylarginine; alternate. The span at 198 to 216 (GSGNFGGGRGDGFGGNDNF) shows a compositional bias: gly residues. An RNA-binding RGG-box region spans residues 218–240 (RGGNFSGRGGFGGSCGGGGYGGS). The nuclear targeting sequence stretch occupies residues 268–305 (NQSSNFGPMKGGNFGGRSSGPYGGGGQYFAKPQNQGGY). The segment at 271-320 (SNFGPMKGGNFGGRSSGPYGGGGQYFAKPQNQGGYGVSSSSSSYGSGRRF) is disordered. Residues 276–294 (MKGGNFGGRSSGPYGGGGQ) show a composition bias toward gly residues. Residue R284 is modified to Omega-N-methylarginine. Position 298 is an N6-acetyllysine (K298). A compositionally biased stretch (low complexity) spans 307–320 (VSSSSSSYGSGRRF).

The protein localises to the nucleus. Its subcellular location is the cytoplasm. Involved in the packaging of pre-mRNA into hnRNP particles, transport of poly(A) mRNA from the nucleus to the cytoplasm and may modulate splice site selection. The chain is Heterogeneous nuclear ribonucleoprotein A1-like 2 (HNRNPA1L2) from Homo sapiens (Human).